The primary structure comprises 123 residues: Transmembrane protein 254 (123 aa).

A run of 3 helical transmembrane segments spans residues 15-35, 63-83, and 95-115; these read LFWF…VFWP, NGYW…LVLC, and LLWF…LIAY.

Its subcellular location is the membrane. This is Transmembrane protein 254 from Mus musculus (Mouse).